A 1014-amino-acid polypeptide reads, in one-letter code: C2 domain-containing protein 5 (1014 aa).

A C2 domain is found at 1 to 109; sequence MPGKLKVKIV…EAATVISGWF (109 aa). Residues Asp19, Asp26, Asp76, Asp78, Ser81, and Asp84 each coordinate Ca(2+). Disordered regions lie at residues 274–328, 639–669, 801–878, and 992–1014; these read LNPN…GRDG, ETVG…AELD, ALQV…HRGG, and EAGP…DSAT. The segment covering 275 to 292 has biased composition (polar residues); sequence NPNTHSSGPSTPLKNQTY. Low complexity predominate over residues 293–318; sequence SFSPSKSFSRQSSSSDTDLSLTPKTG. Over residues 319 to 328 the composition is skewed to gly residues; it reads MGSGSAGRDG. Over residues 830-840 the composition is skewed to polar residues; it reads SSDSPGPSTFS. Residues 993–1006 show a composition bias toward low complexity; that stretch reads AGPGQPTAPGPQSA.

The cofactor is Ca(2+).

It is found in the cytoplasmic vesicle membrane. Its subcellular location is the cytoplasm. The protein localises to the cell cortex. The protein resides in the cell membrane. It localises to the cell projection. It is found in the ruffle. Functionally, may be required for insulin-stimulated glucose transport and glucose transporter SLC2A4/GLUT4 translocation from intracellular glucose storage vesicle (GSV) to the plasma membrane (PM) in adipocytes. May bind phospholipid membranes in a calcium-dependent manner. The sequence is that of C2 domain-containing protein 5 (c2cd5) from Xenopus tropicalis (Western clawed frog).